The chain runs to 511 residues: Xylose import ATP-binding protein XylG (511 aa).

ABC transporter domains are found at residues 6–244 and 261–506; these read LEMR…VGRE and FEAR…IGKP. Position 38 to 45 (38 to 45) interacts with ATP; sequence GENGAGKS.

It belongs to the ABC transporter superfamily. Xylose importer (TC 3.A.1.2.4) family. As to quaternary structure, the complex is composed of two ATP-binding proteins (XylG), two transmembrane proteins (XylH) and a solute-binding protein (XylF).

The protein resides in the cell inner membrane. The catalysed reaction is D-xylose(out) + ATP + H2O = D-xylose(in) + ADP + phosphate + H(+). Its function is as follows. Part of the ABC transporter complex XylFGH involved in xylose import. Responsible for energy coupling to the transport system. In Brucella abortus (strain 2308), this protein is Xylose import ATP-binding protein XylG.